The sequence spans 341 residues: Serine/threonine-protein kinase-like protein At5g23170 (341 aa).

The 283-residue stretch at 16-298 (FSPSKLIGKG…FGEITAEIVA (283 aa)) folds into the Protein kinase domain. ATP is bound by residues 22 to 30 (IGKGSHGYV) and K51. The interval 52–75 (TPSSLSPSSPSSSSSSKSEQTKKL) is disordered. A compositionally biased stretch (low complexity) spans 53 to 69 (PSSLSPSSPSSSSSSKS). The active-site Proton acceptor is the D153. A coiled-coil region spans residues 311–332 (MSVLRRVVKLKRRKKRLRETLT).

Belongs to the protein kinase superfamily. Ser/Thr protein kinase family. As to expression, ubiquitous. Higher expression in mature stamina and pollen.

The catalysed reaction is L-seryl-[protein] + ATP = O-phospho-L-seryl-[protein] + ADP + H(+). It catalyses the reaction L-threonyl-[protein] + ATP = O-phospho-L-threonyl-[protein] + ADP + H(+). In Arabidopsis thaliana (Mouse-ear cress), this protein is Serine/threonine-protein kinase-like protein At5g23170.